The primary structure comprises 114 residues: Protein Tat (114 aa).

Residues Met-1 to Asn-24 form an interaction with human CREBBP region. The transactivation stretch occupies residues Met-1–Gly-48. Zn(2+)-binding residues include Cys-22, Cys-25, and Cys-27. Residues Cys-22–Cys-37 form a cysteine-rich region. Position 28 is an N6-acetyllysine; by host PCAF (Lys-28). 4 residues coordinate Zn(2+): Cys-30, His-33, Cys-34, and Cys-37. A core region spans residues Phe-38–Gly-48. Positions Gly-48–Gln-114 are disordered. The Nuclear localization signal, RNA-binding (TAR), and protein transduction signature appears at Arg-49–Ala-56. Residues Arg-49 to Glu-84 form an interaction with the host capping enzyme RNGTT region. 2 positions are modified to N6-acetyllysine; by host EP300 and GCN5L2: Lys-50 and Lys-51. Arg-52 carries the asymmetric dimethylarginine; by host PRMT6 modification. A Glycyl lysine isopeptide (Lys-Gly) (interchain with G-Cter in ubiquitin) cross-link involves residue Lys-69.

Belongs to the lentiviruses Tat family. As to quaternary structure, interacts with host CCNT1. Associates with the P-TEFb complex composed at least of Tat, P-TEFb (CDK9 and CCNT1), TAR RNA, RNA Pol II. Recruits the HATs CREBBP, TAF1/TFIID, EP300, PCAF and GCN5L2. Interacts with host KAT5/Tip60; this interaction targets the latter to degradation. Interacts with the host deacetylase SIRT1. Interacts with host capping enzyme RNGTT; this interaction stimulates RNGTT. Binds to host KDR, and to the host integrins ITGAV/ITGB3 and ITGA5/ITGB1. Interacts with host KPNB1/importin beta-1 without previous binding to KPNA1/importin alpha-1. Interacts with EIF2AK2. Interacts with host nucleosome assembly protein NAP1L1; this interaction may be required for the transport of Tat within the nucleus, since the two proteins interact at the nuclear rim. Interacts with host C1QBP/SF2P32; this interaction involves lysine-acetylated Tat. Interacts with the host chemokine receptors CCR2, CCR3 and CXCR4. Interacts with host DPP4/CD26; this interaction may trigger an anti-proliferative effect. Interacts with host LDLR. Interacts with the host extracellular matrix metalloproteinase MMP1. Interacts with host PRMT6; this interaction mediates Tat's methylation. Interacts with, and is ubiquitinated by MDM2/Hdm2. Interacts with host PSMC3 and HTATIP2. Interacts with STAB1; this interaction may overcome SATB1-mediated repression of IL2 and IL2RA (interleukin) in T cells by binding to the same domain than HDAC1. Interacts (when acetylated) with human CDK13, thereby increasing HIV-1 mRNA splicing and promoting the production of the doubly spliced HIV-1 protein Nef. Interacts with host TBP; this interaction modulates the activity of transcriptional pre-initiation complex. Interacts with host RELA. Interacts with host PLSCR1; this interaction negatively regulates Tat transactivation activity by altering its subcellular distribution. Post-translationally, asymmetrical arginine methylation by host PRMT6 seems to diminish the transactivation capacity of Tat and affects the interaction with host CCNT1. Acetylation by EP300, CREBBP, GCN5L2/GCN5 and PCAF regulates the transactivation activity of Tat. EP300-mediated acetylation of Lys-50 promotes dissociation of Tat from the TAR RNA through the competitive binding to PCAF's bromodomain. In addition, the non-acetylated Tat's N-terminus can also interact with PCAF. PCAF-mediated acetylation of Lys-28 enhances Tat's binding to CCNT1. Lys-50 is deacetylated by SIRT1. In terms of processing, polyubiquitination by host MDM2 does not target Tat to degradation, but activates its transactivation function and fosters interaction with CCNT1 and TAR RNA. Post-translationally, phosphorylated by EIF2AK2 on serine and threonine residues adjacent to the basic region important for TAR RNA binding and function. Phosphorylation of Tat by EIF2AK2 is dependent on the prior activation of EIF2AK2 by dsRNA.

It is found in the host nucleus. Its subcellular location is the host nucleolus. The protein localises to the host cytoplasm. The protein resides in the secreted. In terms of biological role, transcriptional activator that increases RNA Pol II processivity, thereby increasing the level of full-length viral transcripts. Recognizes a hairpin structure at the 5'-LTR of the nascent viral mRNAs referred to as the transactivation responsive RNA element (TAR) and recruits the cyclin T1-CDK9 complex (P-TEFb complex) that will in turn hyperphosphorylate the RNA polymerase II to allow efficient elongation. The CDK9 component of P-TEFb and other Tat-activated kinases hyperphosphorylate the C-terminus of RNA Pol II that becomes stabilized and much more processive. Other factors such as HTATSF1/Tat-SF1, SUPT5H/SPT5, and HTATIP2 are also important for Tat's function. Besides its effect on RNA Pol II processivity, Tat induces chromatin remodeling of proviral genes by recruiting the histone acetyltransferases (HATs) CREBBP, EP300 and PCAF to the chromatin. This also contributes to the increase in proviral transcription rate, especially when the provirus integrates in transcriptionally silent region of the host genome. To ensure maximal activation of the LTR, Tat mediates nuclear translocation of NF-kappa-B by interacting with host RELA. Through its interaction with host TBP, Tat may also modulate transcription initiation. Tat can reactivate a latently infected cell by penetrating in it and transactivating its LTR promoter. In the cytoplasm, Tat is thought to act as a translational activator of HIV-1 mRNAs. Its function is as follows. Extracellular circulating Tat can be endocytosed by surrounding uninfected cells via the binding to several surface receptors such as CD26, CXCR4, heparan sulfate proteoglycans (HSPG) or LDLR. Neurons are rarely infected, but they internalize Tat via their LDLR. Through its interaction with nuclear HATs, Tat is potentially able to control the acetylation-dependent cellular gene expression. Modulates the expression of many cellular genes involved in cell survival, proliferation or in coding for cytokines or cytokine receptors. Tat plays a role in T-cell and neurons apoptosis. Tat induced neurotoxicity and apoptosis probably contribute to neuroAIDS. Circulating Tat also acts as a chemokine-like and/or growth factor-like molecule that binds to specific receptors on the surface of the cells, affecting many cellular pathways. In the vascular system, Tat binds to ITGAV/ITGB3 and ITGA5/ITGB1 integrins dimers at the surface of endothelial cells and competes with bFGF for heparin-binding sites, leading to an excess of soluble bFGF. The protein is Protein Tat of Homo sapiens (Human).